Consider the following 131-residue polypeptide: Large ribosomal subunit protein bL19 (131 aa).

The tract at residues 107-131 (GKSARIAERAERGSDKGKAAPAAAE) is disordered. Residues 111-124 (RIAERAERGSDKGK) are compositionally biased toward basic and acidic residues.

The protein belongs to the bacterial ribosomal protein bL19 family.

Its function is as follows. This protein is located at the 30S-50S ribosomal subunit interface and may play a role in the structure and function of the aminoacyl-tRNA binding site. The protein is Large ribosomal subunit protein bL19 of Methylobacterium sp. (strain 4-46).